Reading from the N-terminus, the 265-residue chain is MRILVSNDDGIYSPGLWALVKRLKEVGEVIVVAPDREQSATGTQVTLRQPLRVQKTHPLIPGIEAYAVEGSPCDCVILGLAKLITEPVDLVVSGINHGLNLGDDVLISGTVGAALQGYLRNIPSIAVSIPVTMEEPENLDSAACITAEVSRRIQNGDITKNSFLNINIPDLPLSQIEELRVTPLAHKTHIETVEEGHDGRKRYFWLRRRQLSSADNKKTDIWAIENGYITISALHERLFQQPVFTLKDAETAGILAAARSCQDKI.

4 residues coordinate a divalent metal cation: Asp-8, Asp-9, Ser-39, and Asn-96.

It belongs to the SurE nucleotidase family. A divalent metal cation is required as a cofactor.

The protein resides in the cytoplasm. The catalysed reaction is a ribonucleoside 5'-phosphate + H2O = a ribonucleoside + phosphate. In terms of biological role, nucleotidase that shows phosphatase activity on nucleoside 5'-monophosphates. This chain is 5'-nucleotidase SurE, found in Dehalococcoides mccartyi (strain ATCC BAA-2100 / JCM 16839 / KCTC 5957 / BAV1).